Reading from the N-terminus, the 469-residue chain is Putative dipeptidase SAB1611c (469 aa).

His-84 contacts Zn(2+). Asp-86 is a catalytic residue. Asp-115 provides a ligand contact to Zn(2+). Glu-149 functions as the Proton acceptor in the catalytic mechanism. Residues Glu-150, Asp-173, and His-440 each contribute to the Zn(2+) site.

Belongs to the peptidase M20A family. Zn(2+) is required as a cofactor.

The polypeptide is Putative dipeptidase SAB1611c (Staphylococcus aureus (strain bovine RF122 / ET3-1)).